The primary structure comprises 431 residues: GDP-L-galactose phosphorylase 2 (431 aa).

The Tele-GMP-histidine intermediate role is filled by H235. Residues E398–E407 show a composition bias toward acidic residues. A disordered region spans residues E398–T417.

This sequence belongs to the GDPGP1 family. As to quaternary structure, interacts with TLP1. In terms of tissue distribution, expressed in leaves, stems, roots, flowers and siliques.

The protein localises to the cytoplasm. Its subcellular location is the nucleus. The enzyme catalyses GDP-beta-L-galactose + phosphate = beta-L-galactose 1-phosphate + GDP + H(+). It participates in cofactor biosynthesis; L-ascorbate biosynthesis via GDP-alpha-D-mannose pathway; L-ascorbate from GDP-alpha-D-mannose: step 2/5. Catalyzes a reaction of the Smirnoff-Wheeler pathway, the major route to ascorbate biosynthesis in plants. Acts as a phosphorylase rather than as a transferase. Uses preferentially GDP-L-galactose and GDP-D-glucose as substrates. Lower activity with GDP-L-fucose, very low activity with GDP-D-mannose, and no activity with UDP-D-glucose, UDP-D-galactose or ADP-D-glucose. Highly specific for inorganic phosphate as the guanylyl acceptor. In Arabidopsis thaliana (Mouse-ear cress), this protein is GDP-L-galactose phosphorylase 2 (VTC5).